The chain runs to 92 residues: uncharacterized protein (92 aa).

The 92-residue stretch at 1–92 folds into the HTH arsR-type domain; sequence MNGNKDAIFK…LKNLLKGWIE (92 aa). The H-T-H motif DNA-binding region spans 37–61; the sequence is IRLITKYDLSITRQAIAKHLSVLED.

This is an uncharacterized protein from Bacillus subtilis (strain 168).